The following is a 463-amino-acid chain: Fumarate hydratase class II (463 aa).

Substrate-binding positions include 98–100 (SGT), 129–132 (HPND), 139–141 (SSN), and Thr-187. The Proton donor/acceptor role is filled by His-188. The active site involves Ser-318. Residues Ser-319 and 324-326 (KVN) contribute to the substrate site.

This sequence belongs to the class-II fumarase/aspartase family. Fumarase subfamily. Homotetramer.

It localises to the cytoplasm. The enzyme catalyses (S)-malate = fumarate + H2O. It participates in carbohydrate metabolism; tricarboxylic acid cycle; (S)-malate from fumarate: step 1/1. Its function is as follows. Involved in the TCA cycle. Catalyzes the stereospecific interconversion of fumarate to L-malate. This is Fumarate hydratase class II from Brucella melitensis biotype 1 (strain ATCC 23456 / CCUG 17765 / NCTC 10094 / 16M).